We begin with the raw amino-acid sequence, 51 residues long: Basic phospholipase A2 Bfon11 (51 aa).

Ca(2+)-binding residues include tyrosine 27, glycine 29, and glycine 31. A disulfide bond links cysteine 28 and cysteine 43. The active site involves histidine 46. Aspartate 47 is a Ca(2+) binding site.

It belongs to the phospholipase A2 family. Group II subfamily. D49 sub-subfamily. Ca(2+) serves as cofactor. In terms of tissue distribution, expressed by the venom gland.

It is found in the secreted. The catalysed reaction is a 1,2-diacyl-sn-glycero-3-phosphocholine + H2O = a 1-acyl-sn-glycero-3-phosphocholine + a fatty acid + H(+). Functionally, snake venom phospholipase A2 (PLA2) that impairs hemostasis. PLA2 catalyzes the calcium-dependent hydrolysis of the 2-acyl groups in 3-sn-phosphoglycerides. The polypeptide is Basic phospholipase A2 Bfon11 (Bothrops fonsecai (Fonseca's lancehead)).